The following is a 317-amino-acid chain: ADIPOR-like receptor IZH2 (317 aa).

Residues 1-78 (MSTLLERTKS…TFKSLFYLHN (78 aa)) lie on the Cytoplasmic side of the membrane. A helical transmembrane segment spans residues 79 to 99 (ESVNIYSHLIPALGFFTVLLL). At 100 to 110 (DKSTIKVFATT) the chain is on the extracellular side. A helical transmembrane segment spans residues 111–131 (TWLDHMVIDLFYSGAFACLIL). Topologically, residues 132-153 (SSSFHCLKSHSLRIATLGNKLD) are cytoplasmic. A helical transmembrane segment spans residues 154 to 174 (YLGICILIVTSMVSILYYGYF). The Extracellular portion of the chain corresponds to 175 to 176 (EK). The chain crosses the membrane as a helical span at residues 177-197 (FSLFCLFALITVSFGIACSIV). The Cytoplasmic portion of the chain corresponds to 198–212 (SLKDKFRKREWRPYR). A helical membrane pass occupies residues 213–233 (AGLFVCFGLSSIIPIFSGLYC). The Extracellular portion of the chain corresponds to 234–242 (YSFSEIWTQ). Residues 243–263 (IQLFWVLLGGVLYIIGAVLYG) form a helical membrane-spanning segment. The Cytoplasmic segment spans residues 264–276 (MRFPEKICPGKFD). A helical transmembrane segment spans residues 277 to 297 (IWGHSHQLFHFLVVIAALCHL). At 298-317 (RGLLNSYELVHIKMENGIVS) the chain is on the extracellular side.

Belongs to the ADIPOR family.

The protein localises to the membrane. Functionally, probable receptor, which is involved in metabolic pathways that regulate lipid metabolism such as fatty acid oxidation. The polypeptide is ADIPOR-like receptor IZH2 (IZH2) (Saccharomyces cerevisiae (strain ATCC 204508 / S288c) (Baker's yeast)).